Consider the following 464-residue polypeptide: Soluble pyridine nucleotide transhydrogenase (464 aa).

35-44 (EASSQVGGSC) provides a ligand contact to FAD.

The protein belongs to the class-I pyridine nucleotide-disulfide oxidoreductase family. FAD serves as cofactor.

Its subcellular location is the cytoplasm. It catalyses the reaction NAD(+) + NADPH = NADH + NADP(+). Its function is as follows. Conversion of NADPH, generated by peripheral catabolic pathways, to NADH, which can enter the respiratory chain for energy generation. The protein is Soluble pyridine nucleotide transhydrogenase of Marinomonas sp. (strain MWYL1).